Here is a 359-residue protein sequence, read N- to C-terminus: 3-dehydroquinate synthase (359 aa).

Residues 71–76, 105–109, 129–130, Lys142, and Lys151 contribute to the NAD(+) site; these read DGEAYK, GVVGD, and TT. Positions 184, 247, and 264 each coordinate Zn(2+).

It belongs to the sugar phosphate cyclases superfamily. Dehydroquinate synthase family. Requires Co(2+) as cofactor. Zn(2+) serves as cofactor. It depends on NAD(+) as a cofactor.

Its subcellular location is the cytoplasm. It carries out the reaction 7-phospho-2-dehydro-3-deoxy-D-arabino-heptonate = 3-dehydroquinate + phosphate. It functions in the pathway metabolic intermediate biosynthesis; chorismate biosynthesis; chorismate from D-erythrose 4-phosphate and phosphoenolpyruvate: step 2/7. Catalyzes the conversion of 3-deoxy-D-arabino-heptulosonate 7-phosphate (DAHP) to dehydroquinate (DHQ). This is 3-dehydroquinate synthase from Burkholderia cenocepacia (strain ATCC BAA-245 / DSM 16553 / LMG 16656 / NCTC 13227 / J2315 / CF5610) (Burkholderia cepacia (strain J2315)).